Reading from the N-terminus, the 2493-residue chain is Adenylate cyclase (2493 aa).

Composition is skewed to polar residues over residues 1–18 (MLFT…SPEQ), 42–51 (RDSNGSSNFT), 60–78 (SQQY…QPDI), 129–147 (PANS…SISP), and 197–210 (APFS…TSVN). Disordered regions lie at residues 1-85 (MLFT…SSTL), 99-148 (FEHA…ISPS), 197-325 (APFS…SSLS), 355-444 (NSPS…QSQS), 475-565 (GSIT…VNML), 616-660 (QAPV…KTSY), 753-832 (NVGE…GSKS), 854-882 (ALVQ…GAGA), and 904-967 (RPSK…ATGT). A compositionally biased stretch (low complexity) spans 211-233 (PSAASTASPSTSAATRTRPRGGT). 2 stretches are compositionally biased toward polar residues: residues 234–246 (NASQ…TSFG) and 253–264 (LSSSRSQYSLRP). 2 stretches are compositionally biased toward basic residues: residues 287–303 (AVKK…KKSS) and 404–422 (HLKK…HLAK). Positions 425-434 (KPGEDADSAR) are enriched in basic and acidic residues. Over residues 500–525 (PSPSQTPIAERQTSVTSTVESPSHAS) the composition is skewed to polar residues. Positions 534–555 (SLRTPSRTTASTSTSSASTVLS) are enriched in low complexity. A compositionally biased stretch (basic and acidic residues) spans 630–640 (TDSELSDRKDS). Positions 641-660 (VVSTHSMRSNHSGISPKTSY) are enriched in polar residues. The span at 754-763 (VGEEEDDDDD) shows a compositional bias: acidic residues. Composition is skewed to low complexity over residues 780–791 (SSSGISSTHASS) and 854–870 (ALVQ…QPSP). Over residues 913-935 (RPNTAGSVGATRPSTTTLGSTLS) the composition is skewed to polar residues. The 103-residue stretch at 970 to 1072 (RNHFIRVYKT…LRFVFRPDSV (103 aa)) folds into the Ras-associating domain. LRR repeat units follow at residues 1086 to 1107 (TFQH…LYKH), 1110 to 1132 (WIVS…VQLC), 1134 to 1155 (SLRT…VRHS), 1157 to 1178 (TLTH…SLDL), 1181 to 1202 (ELMS…FSSI), 1204 to 1225 (TLRN…ICDV), 1227 to 1248 (SLVD…IANL), 1250 to 1271 (NLER…MSEL), 1273 to 1294 (SLRT…LGLP), 1295 to 1316 (RLQN…LGPQ), 1317 to 1336 (LTQV…AALT), 1339 to 1360 (DLTS…LFPQ), 1363 to 1385 (ALVK…GDLK), 1386 to 1407 (RLEM…IGDL), 1409 to 1430 (ALKE…LWLC), 1432 to 1453 (SLAH…PDIR), 1511 to 1534 (SLQK…SELT), 1535 to 1556 (SLEV…SLQT), 1559 to 1580 (KLRE…DLVV), 1583 to 1605 (ELRI…GKLK), 1606 to 1628 (KLAN…HYDW), and 1635 to 1654 (ELRY…TKLS). One can recognise a PPM-type phosphatase domain in the interval 1710-2000 (AYGIADALGK…ESIMVMVISV (291 aa)). The 137-residue stretch at 2058–2194 (ALVFTDIKNS…PMVNRAARIS (137 aa)) folds into the Guanylate cyclase domain. Residues Asp2063 and Asp2105 each contribute to the Mg(2+) site. Disordered regions lie at residues 2220–2241 (DESS…TEEE), 2354–2378 (EADR…HGTA), and 2467–2493 (PPRA…ELVP). Polar residues predominate over residues 2470-2485 (ASTSALSLPSPRTSPR).

The protein belongs to the adenylyl cyclase class-3 family. Mg(2+) is required as a cofactor.

The enzyme catalyses ATP = 3',5'-cyclic AMP + diphosphate. Functionally, plays essential roles in regulation of cellular metabolism by catalyzing the synthesis of a second messenger, cAMP. The chain is Adenylate cyclase (UAC1) from Mycosarcoma maydis (Corn smut fungus).